The sequence spans 443 residues: Probable glycine dehydrogenase (decarboxylating) subunit 1 (443 aa).

This sequence belongs to the GcvP family. N-terminal subunit subfamily. As to quaternary structure, the glycine cleavage system is composed of four proteins: P, T, L and H. In this organism, the P 'protein' is a heterodimer of two subunits.

It carries out the reaction N(6)-[(R)-lipoyl]-L-lysyl-[glycine-cleavage complex H protein] + glycine + H(+) = N(6)-[(R)-S(8)-aminomethyldihydrolipoyl]-L-lysyl-[glycine-cleavage complex H protein] + CO2. Functionally, the glycine cleavage system catalyzes the degradation of glycine. The P protein binds the alpha-amino group of glycine through its pyridoxal phosphate cofactor; CO(2) is released and the remaining methylamine moiety is then transferred to the lipoamide cofactor of the H protein. The protein is Probable glycine dehydrogenase (decarboxylating) subunit 1 of Solidesulfovibrio magneticus (strain ATCC 700980 / DSM 13731 / RS-1) (Desulfovibrio magneticus).